The primary structure comprises 339 residues: Glyceraldehyde-3-phosphate dehydrogenase (339 aa).

NAD(+)-binding positions include 12-13 (RI), D39, R84, and S127. D-glyceraldehyde 3-phosphate is bound by residues 157-159 (SCT), T188, R203, 216-217 (TG), and R239. C158 acts as the Nucleophile in catalysis. N320 is an NAD(+) binding site.

This sequence belongs to the glyceraldehyde-3-phosphate dehydrogenase family. As to quaternary structure, homotetramer.

It is found in the cytoplasm. The enzyme catalyses D-glyceraldehyde 3-phosphate + phosphate + NAD(+) = (2R)-3-phospho-glyceroyl phosphate + NADH + H(+). The protein operates within carbohydrate degradation; glycolysis; pyruvate from D-glyceraldehyde 3-phosphate: step 1/5. In terms of biological role, catalyzes the oxidative phosphorylation of glyceraldehyde 3-phosphate (G3P) to 1,3-bisphosphoglycerate (BPG) using the cofactor NAD. The first reaction step involves the formation of a hemiacetal intermediate between G3P and a cysteine residue, and this hemiacetal intermediate is then oxidized to a thioester, with concomitant reduction of NAD to NADH. The reduced NADH is then exchanged with the second NAD, and the thioester is attacked by a nucleophilic inorganic phosphate to produce BPG. The protein is Glyceraldehyde-3-phosphate dehydrogenase (gapA) of Mycobacterium leprae (strain TN).